The following is a 263-amino-acid chain: Glucosamine-6-phosphate deaminase (263 aa).

Asp-72 serves as the catalytic Proton acceptor; for enolization step. Residue Asp-141 is the For ring-opening step of the active site. Catalysis depends on His-143, which acts as the Proton acceptor; for ring-opening step. The For ring-opening step role is filled by Glu-148.

This sequence belongs to the glucosamine/galactosamine-6-phosphate isomerase family. NagB subfamily.

It carries out the reaction alpha-D-glucosamine 6-phosphate + H2O = beta-D-fructose 6-phosphate + NH4(+). It functions in the pathway amino-sugar metabolism; N-acetylneuraminate degradation; D-fructose 6-phosphate from N-acetylneuraminate: step 5/5. Its activity is regulated as follows. Allosterically activated by N-acetylglucosamine 6-phosphate (GlcNAc6P). In terms of biological role, catalyzes the reversible isomerization-deamination of glucosamine 6-phosphate (GlcN6P) to form fructose 6-phosphate (Fru6P) and ammonium ion. This is Glucosamine-6-phosphate deaminase from Phocaeicola vulgatus (strain ATCC 8482 / DSM 1447 / JCM 5826 / CCUG 4940 / NBRC 14291 / NCTC 11154) (Bacteroides vulgatus).